Consider the following 296-residue polypeptide: Fructose-bisphosphate aldolase class 1 (296 aa).

Residue Glu-175 is the Proton acceptor of the active site. The active-site Schiff-base intermediate with dihydroxyacetone-P is the Lys-212.

This sequence belongs to the class I fructose-bisphosphate aldolase family.

The catalysed reaction is beta-D-fructose 1,6-bisphosphate = D-glyceraldehyde 3-phosphate + dihydroxyacetone phosphate. The protein operates within carbohydrate degradation; glycolysis; D-glyceraldehyde 3-phosphate and glycerone phosphate from D-glucose: step 4/4. The protein is Fructose-bisphosphate aldolase class 1 (fda) of Staphylococcus carnosus (strain TM300).